The primary structure comprises 361 residues: MWLKSLTLKHFRNYQDAEINFHSGLNIFLGQNAQGKTNILESIYFLALTRSHRTRSDKDFIHFQEKDLKVSGILEKKTGTIPLDIELTAKGRITKINHLKQNRLSDYIGAMNVVLFAPEDLQLIKGSPSLRRKFIDIELGQIKPIYLADLSNYNHVLKQRNSYLKNSQNIDENFLSVLDEQLIEYGCRVVKHRLDFLKKLEIFAQEKHLDISQKKETLTIDYLSSVPLQDIDSIEESFRLSLSKNRKRDLFKQNTGVGPHRDDIAFFINQMDANYGSQGQHRSVVLSLKLAEIKLIENITKESPILLLDDVMSELDNDRQLKLLETISQEIQTFITTTTLEHLKNLPKDIKIFEISNGNIK.

Residue 30–37 (GQNAQGKT) participates in ATP binding.

This sequence belongs to the RecF family.

Its subcellular location is the cytoplasm. The RecF protein is involved in DNA metabolism; it is required for DNA replication and normal SOS inducibility. RecF binds preferentially to single-stranded, linear DNA. It also seems to bind ATP. The protein is DNA replication and repair protein RecF of Streptococcus gordonii (strain Challis / ATCC 35105 / BCRC 15272 / CH1 / DL1 / V288).